The following is a 278-amino-acid chain: Potassium/proton antiporter CemA (278 aa).

The next 4 membrane-spanning stretches (helical) occupy residues 61–81 (ILLLFISPVLVNQASKFFVFG), 155–175 (AVKNILSDLVSILVFILLMIT), 203–223 (IILFTDMFVGFHSPHGWEVII), and 238–258 (FIFLFISTFPVILDTIFKYWI).

Belongs to the CemA family.

It is found in the plastid. It localises to the chloroplast inner membrane. The catalysed reaction is K(+)(in) + H(+)(out) = K(+)(out) + H(+)(in). In terms of biological role, contributes to K(+)/H(+) antiport activity by supporting proton efflux to control proton extrusion and homeostasis in chloroplasts in a light-dependent manner to modulate photosynthesis. Prevents excessive induction of non-photochemical quenching (NPQ) under continuous-light conditions. Indirectly promotes efficient inorganic carbon uptake into chloroplasts. This is Potassium/proton antiporter CemA from Pyropia yezoensis (Susabi-nori).